A 164-amino-acid polypeptide reads, in one-letter code: Neurotrophin-3 (164 aa).

The signal sequence occupies residues 1 to 3 (IQS). The propeptide occupies 4-120 (TNMDQQGSLT…ALNRTSRRKR (117 aa)). The N-linked (GlcNAc...) asparagine glycan is linked to Asn113.

Belongs to the NGF-beta family.

It is found in the secreted. Seems to promote the survival of visceral and proprioceptive sensory neurons. This Sanzinia madagascariensis (Madagascar tree boa) protein is Neurotrophin-3 (NTF3).